Here is a 483-residue protein sequence, read N- to C-terminus: Glycogen synthase (483 aa).

Residue Lys15 coordinates ADP-alpha-D-glucose.

Belongs to the glycosyltransferase 1 family. Bacterial/plant glycogen synthase subfamily.

The catalysed reaction is [(1-&gt;4)-alpha-D-glucosyl](n) + ADP-alpha-D-glucose = [(1-&gt;4)-alpha-D-glucosyl](n+1) + ADP + H(+). The protein operates within glycan biosynthesis; glycogen biosynthesis. In terms of biological role, synthesizes alpha-1,4-glucan chains using ADP-glucose. This is Glycogen synthase from Alkalilimnicola ehrlichii (strain ATCC BAA-1101 / DSM 17681 / MLHE-1).